Consider the following 166-residue polypeptide: Small ribosomal subunit protein uS5 (166 aa).

Residues 11–74 (LQEKLVQVNR…EAARKNMVDV (64 aa)) enclose the S5 DRBM domain.

The protein belongs to the universal ribosomal protein uS5 family. Part of the 30S ribosomal subunit. Contacts proteins S4 and S8.

Functionally, with S4 and S12 plays an important role in translational accuracy. Located at the back of the 30S subunit body where it stabilizes the conformation of the head with respect to the body. The polypeptide is Small ribosomal subunit protein uS5 (Marinobacter nauticus (strain ATCC 700491 / DSM 11845 / VT8) (Marinobacter aquaeolei)).